The primary structure comprises 159 residues: Gigasin-1 (159 aa).

Disordered regions lie at residues 1 to 33 (GKAT…HDQT) and 80 to 159 (KESY…KYRR).

In terms of tissue distribution, component of the organic matrix of calcified shell layers.

The protein is Gigasin-1 of Magallana gigas (Pacific oyster).